A 249-amino-acid polypeptide reads, in one-letter code: Probable transcriptional regulatory protein IL1088 (249 aa).

It belongs to the TACO1 family.

It is found in the cytoplasm. This Idiomarina loihiensis (strain ATCC BAA-735 / DSM 15497 / L2-TR) protein is Probable transcriptional regulatory protein IL1088.